The chain runs to 248 residues: Sulfur carrier protein FdhD (248 aa).

Cys99 functions as the Cysteine persulfide intermediate in the catalytic mechanism. 232 to 237 (FVRGKR) contributes to the Mo-bis(molybdopterin guanine dinucleotide) binding site.

It belongs to the FdhD family.

The protein localises to the cytoplasm. In terms of biological role, required for formate dehydrogenase (FDH) activity. Acts as a sulfur carrier protein that transfers sulfur from IscS to the molybdenum cofactor prior to its insertion into FDH. This chain is Sulfur carrier protein FdhD, found in Methanothermobacter thermautotrophicus (strain ATCC 29096 / DSM 1053 / JCM 10044 / NBRC 100330 / Delta H) (Methanobacterium thermoautotrophicum).